We begin with the raw amino-acid sequence, 620 residues long: MNVISCSFSLEHNLYETMSCLQRCSKQEELKQIHARMLKTGLMQDSYAITKFLSFCISSTSSDFLPYAQIVFDGFDRPDTFLWNLMIRGFSCSDEPERSLLLYQRMLCSSAPHNAYTFPSLLKACSNLSAFEETTQIHAQITKLGYENDVYAVNSLINSYAVTGNFKLAHLLFDRIPEPDDVSWNSVIKGYVKAGKMDIALTLFRKMAEKNAISWTTMISGYVQADMNKEALQLFHEMQNSDVEPDNVSLANALSACAQLGALEQGKWIHSYLNKTRIRMDSVLGCVLIDMYAKCGEMEEALEVFKNIKKKSVQAWTALISGYAYHGHGREAISKFMEMQKMGIKPNVITFTAVLTACSYTGLVEEGKLIFYSMERDYNLKPTIEHYGCIVDLLGRAGLLDEAKRFIQEMPLKPNAVIWGALLKACRIHKNIELGEEIGEILIAIDPYHGGRYVHKANIHAMDKKWDKAAETRRLMKEQGVAKVPGCSTISLEGTTHEFLAGDRSHPEIEKIQSKWRIMRRKLEENGYVPELEEMLLDLVDDDEREAIVHQHSEKLAITYGLIKTKPGTIIRIMKNLRVCKDCHKVTKLISKIYKRDIVMRDRTRFHHFRDGKCSCGDYW.

PPR repeat units follow at residues 79-113 (DTFLWNLMIRGFSCSDEPERSLLLYQRMLCSSAPH), 114-148 (NAYTFPSLLKACSNLSAFEETTQIHAQITKLGYEN), 149-179 (DVYAVNSLINSYAVTGNFKLAHLLFDRIPEP), 180-210 (DDVSWNSVIKGYVKAGKMDIALTLFRKMAEK), 211-245 (NAISWTTMISGYVQADMNKEALQLFHEMQNSDVEP), 246-280 (DNVSLANALSACAQLGALEQGKWIHSYLNKTRIRM), 281-311 (DSVLGCVLIDMYAKCGEMEEALEVFKNIKKK), 312-346 (SVQAWTALISGYAYHGHGREAISKFMEMQKMGIKP), 347-382 (NVITFTAVLTACSYTGLVEEGKLIFYSMERDYNLKP), and 383-413 (TIEHYGCIVDLLGRAGLLDEAKRFIQEMPLK). The segment at 418 to 493 (IWGALLKACR…VPGCSTISLE (76 aa)) is type E motif. Positions 494-524 (GTTHEFLAGDRSHPEIEKIQSKWRIMRRKLE) are type E(+) motif. Residues 525 to 620 (ENGYVPELEE…DGKCSCGDYW (96 aa)) form a type DYW motif region.

It belongs to the PPR family. PCMP-H subfamily.

The sequence is that of Pentatricopeptide repeat-containing protein At5g66520 (PCMP-H61) from Arabidopsis thaliana (Mouse-ear cress).